A 277-amino-acid chain; its full sequence is 4-hydroxy-3-methylbut-2-enyl diphosphate reductase (277 aa).

Residue Cys12 coordinates [4Fe-4S] cluster. 2 residues coordinate (2E)-4-hydroxy-3-methylbut-2-enyl diphosphate: His36 and His70. Dimethylallyl diphosphate contacts are provided by His36 and His70. Residues His36 and His70 each coordinate isopentenyl diphosphate. Residue Cys92 participates in [4Fe-4S] cluster binding. His120 is a binding site for (2E)-4-hydroxy-3-methylbut-2-enyl diphosphate. His120 is a binding site for dimethylallyl diphosphate. Residue His120 participates in isopentenyl diphosphate binding. The active-site Proton donor is the Glu122. Residue Thr158 coordinates (2E)-4-hydroxy-3-methylbut-2-enyl diphosphate. Cys186 contacts [4Fe-4S] cluster. (2E)-4-hydroxy-3-methylbut-2-enyl diphosphate contacts are provided by Ser214, Asn216, and Ser258. 3 residues coordinate dimethylallyl diphosphate: Ser214, Asn216, and Ser258. Residues Ser214, Asn216, and Ser258 each coordinate isopentenyl diphosphate.

The protein belongs to the IspH family. [4Fe-4S] cluster is required as a cofactor.

It catalyses the reaction isopentenyl diphosphate + 2 oxidized [2Fe-2S]-[ferredoxin] + H2O = (2E)-4-hydroxy-3-methylbut-2-enyl diphosphate + 2 reduced [2Fe-2S]-[ferredoxin] + 2 H(+). The enzyme catalyses dimethylallyl diphosphate + 2 oxidized [2Fe-2S]-[ferredoxin] + H2O = (2E)-4-hydroxy-3-methylbut-2-enyl diphosphate + 2 reduced [2Fe-2S]-[ferredoxin] + 2 H(+). It functions in the pathway isoprenoid biosynthesis; dimethylallyl diphosphate biosynthesis; dimethylallyl diphosphate from (2E)-4-hydroxy-3-methylbutenyl diphosphate: step 1/1. It participates in isoprenoid biosynthesis; isopentenyl diphosphate biosynthesis via DXP pathway; isopentenyl diphosphate from 1-deoxy-D-xylulose 5-phosphate: step 6/6. In terms of biological role, catalyzes the conversion of 1-hydroxy-2-methyl-2-(E)-butenyl 4-diphosphate (HMBPP) into a mixture of isopentenyl diphosphate (IPP) and dimethylallyl diphosphate (DMAPP). Acts in the terminal step of the DOXP/MEP pathway for isoprenoid precursor biosynthesis. This is 4-hydroxy-3-methylbut-2-enyl diphosphate reductase from Campylobacter jejuni subsp. jejuni serotype O:6 (strain 81116 / NCTC 11828).